A 149-amino-acid chain; its full sequence is Deoxyuridine 5'-triphosphate nucleotidohydrolase (149 aa).

Substrate-binding positions include 68–70, Asn81, and 85–87; these read RSG and LID.

The protein belongs to the dUTPase family. It depends on Mg(2+) as a cofactor.

The catalysed reaction is dUTP + H2O = dUMP + diphosphate + H(+). It functions in the pathway pyrimidine metabolism; dUMP biosynthesis; dUMP from dCTP (dUTP route): step 2/2. This enzyme is involved in nucleotide metabolism: it produces dUMP, the immediate precursor of thymidine nucleotides and it decreases the intracellular concentration of dUTP so that uracil cannot be incorporated into DNA. This is Deoxyuridine 5'-triphosphate nucleotidohydrolase from Aromatoleum aromaticum (strain DSM 19018 / LMG 30748 / EbN1) (Azoarcus sp. (strain EbN1)).